Consider the following 193-residue polypeptide: Phosphoheptose isomerase (193 aa).

The 157-residue stretch at 37–193 (LADSFKAGGK…QLIEKEMVKA (157 aa)) folds into the SIS domain. 52–54 (NGG) lines the substrate pocket. Residues His61 and Glu65 each coordinate Zn(2+). Substrate-binding positions include Glu65, 93 to 94 (ND), 119 to 121 (STS), Ser124, and Gln172. Gln172 and His180 together coordinate Zn(2+).

Belongs to the SIS family. GmhA subfamily. Homotetramer. Zn(2+) serves as cofactor.

It localises to the cytoplasm. The enzyme catalyses 2 D-sedoheptulose 7-phosphate = D-glycero-alpha-D-manno-heptose 7-phosphate + D-glycero-beta-D-manno-heptose 7-phosphate. It functions in the pathway carbohydrate biosynthesis; D-glycero-D-manno-heptose 7-phosphate biosynthesis; D-glycero-alpha-D-manno-heptose 7-phosphate and D-glycero-beta-D-manno-heptose 7-phosphate from sedoheptulose 7-phosphate: step 1/1. The protein operates within bacterial outer membrane biogenesis; LPS core biosynthesis. In terms of biological role, catalyzes the isomerization of sedoheptulose 7-phosphate in D-glycero-D-manno-heptose 7-phosphate. The sequence is that of Phosphoheptose isomerase from Yersinia pestis.